The following is a 748-amino-acid chain: Polyribonucleotide nucleotidyltransferase (748 aa).

The Mg(2+) site is built by Asp487 and Asp493. The KH domain maps to 554-613; it reads PSTTTIKIDKDKIRDIIGPGGKVIKEICETSGAKIDISDDGTVSVYASDRDKLKVALDKI. The S1 motif domain occupies 623-691; sequence GEIFNGTVVK…NKGKAKLTIK (69 aa). The segment at 691–748 is disordered; the sequence is KNADKDKSSNNTKPKTNVNNTKDNSEPEQRRDSSKKRAWNEDNNAETAEVITERKYFN. A compositionally biased stretch (low complexity) spans 699 to 712; the sequence is SNNTKPKTNVNNTK. Residues 713–722 show a composition bias toward basic and acidic residues; it reads DNSEPEQRRD.

It belongs to the polyribonucleotide nucleotidyltransferase family. Mg(2+) serves as cofactor.

It localises to the cytoplasm. It carries out the reaction RNA(n+1) + phosphate = RNA(n) + a ribonucleoside 5'-diphosphate. Involved in mRNA degradation. Catalyzes the phosphorolysis of single-stranded polyribonucleotides processively in the 3'- to 5'-direction. The protein is Polyribonucleotide nucleotidyltransferase of Rickettsia africae (strain ESF-5).